The following is a 200-amino-acid chain: Small ribosomal subunit protein uS4 (200 aa).

A disordered region spans residues Thr-22 to Arg-41. Residues Thr-92–Gly-152 enclose the S4 RNA-binding domain.

It belongs to the universal ribosomal protein uS4 family. In terms of assembly, part of the 30S ribosomal subunit. Contacts protein S5. The interaction surface between S4 and S5 is involved in control of translational fidelity.

Its function is as follows. One of the primary rRNA binding proteins, it binds directly to 16S rRNA where it nucleates assembly of the body of the 30S subunit. With S5 and S12 plays an important role in translational accuracy. This chain is Small ribosomal subunit protein uS4, found in Lysinibacillus sphaericus (strain C3-41).